The following is a 159-amino-acid chain: Transmembrane protein 42 (159 aa).

Transmembrane regions (helical) follow at residues 37-57, 59-79, 100-120, and 124-144; these read FWGV…AASA, LAFG…VMAS, IASV…GYVL, and CQEV…TLIH.

The protein resides in the membrane. The sequence is that of Transmembrane protein 42 (TMEM42) from Homo sapiens (Human).